A 615-amino-acid polypeptide reads, in one-letter code: Zinc metalloproteinase R519 (615 aa).

In terms of domain architecture, Peptidase M13 spans 1 to 611 (MTYRSCIPQN…LDPQLRSRIL (611 aa)). His454 provides a ligand contact to Zn(2+). The active site involves Glu455. Residues His458 and Glu513 each contribute to the Zn(2+) site. Asp517 (proton donor) is an active-site residue.

It belongs to the peptidase M13 family. Requires Zn(2+) as cofactor.

Its function is as follows. Zinc metalloprotease. The sequence is that of Zinc metalloproteinase R519 from Acanthamoeba polyphaga (Amoeba).